Consider the following 434-residue polypeptide: GTPase Obg (434 aa).

The Obg domain occupies 2–160 (PTFVDQTKIE…RVLRLELKLL (159 aa)). The 174-residue stretch at 161-334 (ADVGLVGFPS…LMNDTATLVE (174 aa)) folds into the OBG-type G domain. Residues 167–174 (GFPSVGKS), 192–196 (FTTLT), 214–217 (DLPG), 284–287 (SQMD), and 315–317 (SSV) each bind GTP. Residues Ser174 and Thr194 each coordinate Mg(2+). Residues 356–434 (YKAPQKNEFT…IGKFVFEFVQ (79 aa)) enclose the OCT domain.

It belongs to the TRAFAC class OBG-HflX-like GTPase superfamily. OBG GTPase family. In terms of assembly, monomer. Mg(2+) serves as cofactor.

It localises to the cytoplasm. Its function is as follows. An essential GTPase which binds GTP, GDP and possibly (p)ppGpp with moderate affinity, with high nucleotide exchange rates and a fairly low GTP hydrolysis rate. Plays a role in control of the cell cycle, stress response, ribosome biogenesis and in those bacteria that undergo differentiation, in morphogenesis control. The chain is GTPase Obg from Lactobacillus helveticus (strain DPC 4571).